Consider the following 805-residue polypeptide: Transducer protein BasT (805 aa).

2 helical membrane-spanning segments follow: residues 25–45 (FNVL…YIHL) and 296–316 (NLAG…LTVG). HAMP domains follow at residues 317–370 (RRTS…TAAS) and 437–490 (ERLE…ATLA). Residues 509–745 (SAAEIRSASD…EVVTMIDEVT (237 aa)) enclose the Methyl-accepting transducer domain. Positions 513–532 (IRSASDQVSESVQDISADAD) are disordered. Over residues 516-526 (ASDQVSESVQD) the composition is skewed to polar residues. Glu-554, Glu-736, and Glu-763 each carry glutamate methyl ester (Glu). The disordered stretch occupies residues 752–779 (ATESQQVSAAAEEQAASVSEVAGRADDL). Low complexity predominate over residues 754–773 (ESQQVSAAAEEQAASVSEVA).

It belongs to the methyl-accepting chemotaxis (MCP) protein family. In terms of assembly, interacts with CheA, CheY, CheW1 and CheW2. Methylated by CheR.

It localises to the cell membrane. In terms of biological role, mediates chemotaxis towards five attractant amino acids (leucine, isoleucine, valine, methionine and cysteine). Probably transduces the signal from the substrate-binding protein BasB to the histidine kinase CheA. This is Transducer protein BasT (basT) from Halobacterium salinarum (strain ATCC 29341 / DSM 671 / R1).